The primary structure comprises 440 residues: Thymidine phosphorylase (440 aa).

This sequence belongs to the thymidine/pyrimidine-nucleoside phosphorylase family. As to quaternary structure, homodimer.

It carries out the reaction thymidine + phosphate = 2-deoxy-alpha-D-ribose 1-phosphate + thymine. The protein operates within pyrimidine metabolism; dTMP biosynthesis via salvage pathway; dTMP from thymine: step 1/2. The enzymes which catalyze the reversible phosphorolysis of pyrimidine nucleosides are involved in the degradation of these compounds and in their utilization as carbon and energy sources, or in the rescue of pyrimidine bases for nucleotide synthesis. The protein is Thymidine phosphorylase of Yersinia pestis.